The chain runs to 344 residues: Beta-1,4-galactosyltransferase 4 (344 aa).

The Cytoplasmic segment spans residues 1-12 (MGCNPPYLLPYR). The helical; Signal-anchor for type II membrane protein transmembrane segment at 13–38 (LRLLLFFTLCLTVVGWVTSNYFVDPI) threads the bilayer. Topologically, residues 39–344 (QVIPKAKVFM…NITVDFWTGV (306 aa)) are lumenal. Cysteine 77 and cysteine 118 are oxidised to a cystine. UDP-alpha-D-galactose is bound by residues 129–133 (PHRNR), 168–170 (FNR), and 195–196 (VD). Cysteine 189 and cysteine 208 form a disulfide bridge. Mn(2+) is bound at residue aspartate 196. N-linked (GlcNAc...) asparagine glycosylation occurs at asparagine 220. The UDP-alpha-D-galactose site is built by tyrosine 224 and tryptophan 256. Residue 258 to 261 (GEDD) participates in N-acetyl-D-glucosamine binding. Residue histidine 289 participates in Mn(2+) binding. A UDP-alpha-D-galactose-binding site is contributed by 289-291 (HTR). An N-acetyl-D-glucosamine-binding site is contributed by arginine 301. The N-linked (GlcNAc...) asparagine glycan is linked to asparagine 335.

Belongs to the glycosyltransferase 7 family. It depends on Mn(2+) as a cofactor.

It localises to the golgi apparatus. The protein resides in the golgi stack membrane. The enzyme catalyses N-acetyl-D-glucosamine + UDP-alpha-D-galactose = beta-D-galactosyl-(1-&gt;4)-N-acetyl-D-glucosamine + UDP + H(+). It carries out the reaction a beta-D-GlcNAc-(1-&gt;3)-beta-D-Gal-(1-&gt;4)-beta-D-Glc-(1&lt;-&gt;1)-Cer(d18:1(4E)) + UDP-alpha-D-galactose = a neolactoside nLc4Cer(d18:1(4E)) + UDP + H(+). Its pathway is protein modification; protein glycosylation. Its function is as follows. Galactose (Gal) transferase involved in the biosynthesis of glycoproteins, proteoglycans, and glycosyphingolipids. Catalyzes the transfer of Gal residue via a beta1-&gt;4 linkage from UDP-Gal to the non-reducing terminal N-acetyl glucosamine 6-O-sulfate (6-O-sulfoGlcNAc) in the linearly growing chain of both N- and O-linked keratan sulfate proteoglycans. Cooperates with B3GNT7 N-acetyl glucosamine transferase and CHST6 and CHST1 sulfotransferases to construct and elongate mono- and disulfated disaccharide units [-&gt;3Galbeta1-&gt;4(6-sulfoGlcNAcbeta)1-&gt;] and [-&gt;3(6-sulfoGalbeta)1-&gt;4(6-sulfoGlcNAcbeta)1-&gt;] within keratan sulfate polymer. The polypeptide is Beta-1,4-galactosyltransferase 4 (B4GALT4) (Cricetulus griseus (Chinese hamster)).